Reading from the N-terminus, the 131-residue chain is Actin-associated protein FAM107A (131 aa).

Residues 57-77 (VLEHRRRNQLIKKKEEELEAK) adopt a coiled-coil conformation. Positions 61–71 (RRRNQLIKKKE) match the Nuclear localization signal motif.

Interacts with ACTB. Interacts with COMMD1; this interaction stabilizes COMMD1 in the nucleus. Interacts with MAP1A. Interacts with PRDX1. Interacts with F-actin.

The protein resides in the nucleus. It localises to the cytoplasm. Its subcellular location is the cytoskeleton. The protein localises to the stress fiber. It is found in the cell junction. The protein resides in the focal adhesion. It localises to the cell projection. Its subcellular location is the ruffle membrane. The protein localises to the synapse. Functionally, stress-inducible actin-binding protein that plays a role in synaptic and cognitive functions by modulating actin filamentous (F-actin) dynamics. Mediates polymerization of globular actin to F-actin. Also binds to, stabilizes and bundles F-actin. Involved in synaptic function by regulating neurite outgrowth in an actin-dependent manner and for the acquisition of hippocampus-dependent cognitive function, such as learning and long-term memory. Plays a role in the actin and microtubule cytoskeleton organization; negatively regulates focal adhesion (FA) assembly promoting malignant glial cell migration in an actin-, microtubule- and MAP1A-dependent manner. Also involved in neuroblastoma G1/S phase cell cycle progression and cell proliferation inhibition by stimulating ubiquitination of NF-kappa-B subunit RELA and NF-kappa-B degradation in a COMMD1- and actin-dependent manner. May play a role in tumor development. In Rattus norvegicus (Rat), this protein is Actin-associated protein FAM107A.